Here is a 276-residue protein sequence, read N- to C-terminus: Small ribosomal subunit protein uS3 (276 aa).

The KH type-2 domain occupies I39–K110.

This sequence belongs to the universal ribosomal protein uS3 family. In terms of assembly, part of the 30S ribosomal subunit. Forms a tight complex with proteins S10 and S14.

Its function is as follows. Binds the lower part of the 30S subunit head. Binds mRNA in the 70S ribosome, positioning it for translation. The polypeptide is Small ribosomal subunit protein uS3 (Borrelia turicatae (strain 91E135)).